Consider the following 504-residue polypeptide: ATP synthase subunit alpha (504 aa).

169-176 provides a ligand contact to ATP; the sequence is GDRQTGKT.

The protein belongs to the ATPase alpha/beta chains family. As to quaternary structure, F-type ATPases have 2 components, CF(1) - the catalytic core - and CF(0) - the membrane proton channel. CF(1) has five subunits: alpha(3), beta(3), gamma(1), delta(1), epsilon(1). CF(0) has three main subunits: a(1), b(2) and c(9-12). The alpha and beta chains form an alternating ring which encloses part of the gamma chain. CF(1) is attached to CF(0) by a central stalk formed by the gamma and epsilon chains, while a peripheral stalk is formed by the delta and b chains.

It localises to the cell membrane. The catalysed reaction is ATP + H2O + 4 H(+)(in) = ADP + phosphate + 5 H(+)(out). Functionally, produces ATP from ADP in the presence of a proton gradient across the membrane. The alpha chain is a regulatory subunit. The sequence is that of ATP synthase subunit alpha from Clostridium botulinum (strain Langeland / NCTC 10281 / Type F).